A 177-amino-acid polypeptide reads, in one-letter code: Large ribosomal subunit protein uL6 (177 aa).

It belongs to the universal ribosomal protein uL6 family. In terms of assembly, part of the 50S ribosomal subunit.

Functionally, this protein binds to the 23S rRNA, and is important in its secondary structure. It is located near the subunit interface in the base of the L7/L12 stalk, and near the tRNA binding site of the peptidyltransferase center. The chain is Large ribosomal subunit protein uL6 from Bradyrhizobium sp. (strain ORS 278).